Reading from the N-terminus, the 470-residue chain is 4-O-methyltransferase 1 (470 aa).

S-adenosyl-L-methionine-binding positions include 274–275 (GG), aspartate 297, 328–329 (DC), and lysine 344. Histidine 348 acts as the Proton acceptor in catalysis.

It belongs to the class I-like SAM-binding methyltransferase superfamily. Cation-independent O-methyltransferase family. COMT subfamily.

Its function is as follows. S-adenosyl-L-methionine-dependent methyltransferase that preferentially catalyzes the methylation of 4-OH phenolic compounds like coniferyl alcohol, vanillyl alcohol and ferrulic acid. May play a role in promoting lignin degradation by methylating and inactivating free-hydroxyl phenolic compounds, products of lignin cleavage which are known inhibitors of lignin peroxidases. This Phanerochaete chrysosporium (strain RP-78 / ATCC MYA-4764 / FGSC 9002) (White-rot fungus) protein is 4-O-methyltransferase 1.